The sequence spans 490 residues: Subtilisin-like protease 8 (490 aa).

Residues 1 to 26 (MKGLLSLSVLPVLAYASPMIVDSIHQ) form the signal peptide. The propeptide occupies 27-134 (NAAPILSSTN…YIERDSEVHT (108 aa)). The Inhibitor I9 domain maps to 43-134 (SYIVVFKKGV…YIERDSEVHT (92 aa)). Positions 144-450 (PWGLARISHR…GGSDDYKKII (307 aa)) constitute a Peptidase S8 domain. Residues aspartate 180 and histidine 212 each act as charge relay system in the active site. The N-linked (GlcNAc...) asparagine glycan is linked to asparagine 282. The active-site Charge relay system is the serine 378. An N-linked (GlcNAc...) asparagine glycan is attached at asparagine 456.

It belongs to the peptidase S8 family.

It localises to the secreted. Functionally, secreted subtilisin-like serine protease with keratinolytic activity that contributes to pathogenicity. This Trichophyton verrucosum (strain HKI 0517) protein is Subtilisin-like protease 8 (SUB8).